The primary structure comprises 190 residues: Nucleoside triphosphate pyrophosphatase (190 aa).

D69 functions as the Proton acceptor in the catalytic mechanism.

The protein belongs to the Maf family. The cofactor is a divalent metal cation.

The protein resides in the cytoplasm. It carries out the reaction a ribonucleoside 5'-triphosphate + H2O = a ribonucleoside 5'-phosphate + diphosphate + H(+). The enzyme catalyses a 2'-deoxyribonucleoside 5'-triphosphate + H2O = a 2'-deoxyribonucleoside 5'-phosphate + diphosphate + H(+). Functionally, nucleoside triphosphate pyrophosphatase. May have a dual role in cell division arrest and in preventing the incorporation of modified nucleotides into cellular nucleic acids. This chain is Nucleoside triphosphate pyrophosphatase, found in Helicobacter pylori (strain J99 / ATCC 700824) (Campylobacter pylori J99).